Here is a 483-residue protein sequence, read N- to C-terminus: Transmembrane protein 39B (483 aa).

Asn9 carries an N-linked (GlcNAc...) asparagine glycan. A run of 7 helical transmembrane segments spans residues 76 to 96 (HLLF…VHYI), 114 to 134 (TSLN…IVLA), 158 to 182 (LLVA…ILLF), 187 to 207 (FFNL…LQLG), 281 to 301 (EVLL…VWFV), 414 to 434 (VLNI…YSLL), and 440 to 460 (HHTI…FKLL).

Belongs to the TMEM39 family.

The protein localises to the endoplasmic reticulum membrane. May protect the cells against DNA damage caused by exposure to the cold-warming stress and facilitates tissue damage repair during the recovery phase. In Xenopus tropicalis (Western clawed frog), this protein is Transmembrane protein 39B.